Here is an 820-residue protein sequence, read N- to C-terminus: Phenylalanine--tRNA ligase beta subunit (820 aa).

The tRNA-binding domain occupies 42–154; the sequence is KGGLEGLVIG…EDAVPGTLAK (113 aa). The 77-residue stretch at 413–489 folds into the B5 domain; it reads AQDFIVELTY…RIYGYNNVEI (77 aa). Residues D467, D473, E476, and D477 each contribute to the Mg(2+) site. Residues 727–820 form the FDX-ACB domain; the sequence is SKFPAVKRDL…LEDKLGAKLR (94 aa).

The protein belongs to the phenylalanyl-tRNA synthetase beta subunit family. Type 1 subfamily. In terms of assembly, tetramer of two alpha and two beta subunits. It depends on Mg(2+) as a cofactor.

The protein resides in the cytoplasm. The enzyme catalyses tRNA(Phe) + L-phenylalanine + ATP = L-phenylalanyl-tRNA(Phe) + AMP + diphosphate + H(+). This Bacteroides fragilis (strain ATCC 25285 / DSM 2151 / CCUG 4856 / JCM 11019 / LMG 10263 / NCTC 9343 / Onslow / VPI 2553 / EN-2) protein is Phenylalanine--tRNA ligase beta subunit.